The sequence spans 301 residues: Glycine--tRNA ligase alpha subunit (301 aa).

It belongs to the class-II aminoacyl-tRNA synthetase family. In terms of assembly, tetramer of two alpha and two beta subunits.

Its subcellular location is the cytoplasm. The enzyme catalyses tRNA(Gly) + glycine + ATP = glycyl-tRNA(Gly) + AMP + diphosphate. In Glaesserella parasuis serovar 5 (strain SH0165) (Haemophilus parasuis), this protein is Glycine--tRNA ligase alpha subunit.